A 126-amino-acid polypeptide reads, in one-letter code: 13 kDa ribonucleoprotein-associated protein (126 aa).

It belongs to the eukaryotic ribosomal protein eL8 family. Component of the U3 snoRNP particle. Binds to the C'/D and B/C motifs in U3 snoRNA. Component of the 25S U4/U6.U5 tri-snRNP particle, a subcomplex of the spliceosome. Binds to the 5' stem-loop of U4 snRNA.

It localises to the nucleus. The protein localises to the nucleolus. In terms of biological role, common component of the spliceosome and rRNA processing machinery. In association with the spliceosomal U4/U6.U5 tri-snRNP particle, required for splicing of pre-mRNA. In association with box C/D snoRNPs, required for processing of pre-ribosomal RNA (rRNA) and site-specific 2'-O-methylation of substrate RNAs. Essential for the accumulation and stability of U4 snRNA, U6 snRNA, and box C/D snoRNAs. This Candida albicans (strain SC5314 / ATCC MYA-2876) (Yeast) protein is 13 kDa ribonucleoprotein-associated protein (SNU13).